Here is a 445-residue protein sequence, read N- to C-terminus: C4-dicarboxylate transport protein 2 (445 aa).

8 helical membrane-spanning segments follow: residues 24–44, 62–82, 96–116, 163–183, 201–221, 237–257, 334–354, and 366–386; these read ILYV…WLFP, LIKM…IAHI, LVYF…VGNL, GDIL…MALG, FGVI…AMAF, LIAL…GLIA, ALGV…AMLT, and FITL…GMAI.

The protein belongs to the dicarboxylate/amino acid:cation symporter (DAACS) (TC 2.A.23) family.

The protein localises to the cell inner membrane. Responsible for the transport of dicarboxylates such as succinate, fumarate, and malate from the periplasm across the membrane. The chain is C4-dicarboxylate transport protein 2 from Bradyrhizobium sp. (strain ORS 278).